The chain runs to 318 residues: Cytochrome f (318 aa).

The first 32 residues, 1 to 32 (MQNKNNYNWLKEWVIRSFLLLTLLTWPSVSNA), serve as a signal peptide directing secretion. Heme contacts are provided by tyrosine 33, cysteine 53, cysteine 56, and histidine 57. Residues 284 to 304 (IQGLLLFFASVVLAQIFLVLK) form a helical membrane-spanning segment.

The protein belongs to the cytochrome f family. As to quaternary structure, the 4 large subunits of the cytochrome b6-f complex are cytochrome b6, subunit IV (17 kDa polypeptide, petD), cytochrome f and the Rieske protein, while the 4 small subunits are PetG, PetL, PetM and PetN. The complex functions as a dimer. Heme serves as cofactor.

It localises to the plastid. The protein localises to the chloroplast thylakoid membrane. Component of the cytochrome b6-f complex, which mediates electron transfer between photosystem II (PSII) and photosystem I (PSI), cyclic electron flow around PSI, and state transitions. The protein is Cytochrome f of Angiopteris evecta (Mule's foot fern).